Here is a 154-residue protein sequence, read N- to C-terminus: Protein MoxZ (154 aa).

In Paracoccus denitrificans, this protein is Protein MoxZ (moxZ).